The chain runs to 869 residues: Mismatch repair endonuclease PMS2 (869 aa).

Asn44, Asp69, Glu108, Ala109, and Leu110 together coordinate ATP. Residues 585–588 (RRFK) carry the Nuclear localization signal motif.

Belongs to the DNA mismatch repair MutL/HexB family.

The protein resides in the nucleus. The enzyme catalyses ATP + H2O = ADP + phosphate + H(+). In terms of biological role, component of the post-replicative DNA mismatch repair system (MMR). Involved in B cell growth by positively regulating B cell proliferation and controlling replication efficiency. Controls cell cycle to prevent re-replication and defects in DNA damage-induced G2 checkpoint. Doesn't seem to counteract or control the immunoglobulin gene conversion (Ig GC) and to contribute to guanine/uracil mismatch repair. Possesses an ATPase activity, but in the absence of gross structural changes, ATP hydrolysis may not be necessary for proficient mismatch repair. This Gallus gallus (Chicken) protein is Mismatch repair endonuclease PMS2.